We begin with the raw amino-acid sequence, 51 residues long: MRDKIRLNSSAGTGHFYTTDKNKKTMPEKFEIKKFDPVVRKHVMYKEGKIK.

The tract at residues Met1–Asp20 is disordered.

Belongs to the bacterial ribosomal protein bL33 family.

This chain is Large ribosomal subunit protein bL33, found in Psychromonas ingrahamii (strain DSM 17664 / CCUG 51855 / 37).